The following is a 200-amino-acid chain: Intraflagellar transport protein 43 homolog (200 aa).

2 disordered regions span residues 56-76 (KTGKSQRKTDDDDSQETIAAP) and 175-200 (ERIDAKDQPSDSRSRNARETLISSKY). A compositionally biased stretch (basic and acidic residues) spans 175 to 192 (ERIDAKDQPSDSRSRNAR).

The protein belongs to the IFT43 family. As to quaternary structure, component of the IFT complex A (IFT-A) composed of at least che-11, daf-10, dyf-2, ift-139, ift-43 and ifta-1. In terms of tissue distribution, expressed in ciliated sensory neurons.

The protein resides in the cell projection. It is found in the cilium. Its function is as follows. As a component of IFT complex A (IFT-A), a complex required for retrograde ciliary transport and entry into cilia of G protein-coupled receptors (GPCRs), it is involved in ciliogenesis. In particular, may act redundantly with the intraflagellar transport protein ift-139 to regulate the transport of specific ciliary cargo proteins such as che-3 which are related to motility. The chain is Intraflagellar transport protein 43 homolog from Caenorhabditis elegans.